Here is an 831-residue protein sequence, read N- to C-terminus: MDTRSLQDFQDLCTFDVFKSFGHYYGYGVDQQALIDQEFKRIKGVTYLDHAGTTLFPESLIKGFHDDISRNVYGNPHSHNSSSRLTHDTVESVRYKILAHFNTSPEDYSVIFTSGCTAALKLVADTFPWKPMSNKEPGSQFCYLTDNHTSVVGIRGATALQGVGTISVSPREVETRARNKTQTNGEEECSTPHLFCYPAQSNFSGRKYSLSYVKGIQSQQLYPACEHHGQWFVLLDAACFVSCSPLDLSQYPADFVPISFYKMFGFPTGLGALLVRNEAAEVLRKTYFGGGTAAAYLVEENYFIPKPNLASRFEDGTISFLDIISLHHGFETLQKLTGSMTNIQLHTFGLARYTYTVLSCLCHSNGKHVAQIYCDNDFQSIAEQGAIINFSLLDCHGRTVGYSQVDKMASLFNIHIRTGCFCNTGACQHYLAISNQNVKSNLHAGHICGDNIDLVDGRPTGSLRVSFGYMSSFEDCQNFLRFVVNCFVDKPLILDQTKLAKLNSAAPIEPSSSYSPSPDRMAVSEVTMSKDGKKDGSSCTLTNLFIFPVKSCASFEVTEWPLGPQGLLYDRLWMVVNENGVCLSQKREPKLCLIQPVVCLAANTLKLQISGSEAITVPLDPSLEKSDLRTSQSKVCGDRVQTVDCGEEVSAWLSEFLGKPCRLIRQRPEFLRDMKFGQGDCCPTPLSLVNEAQFLLINRASVCFLQEAIANRYNSDNEETWRDTEQLVQRFRANLVISAQEPFAEDNWSHLTIGNTQFQVIGKCGRCQMIGVDQKTATRTQEPLRSLSECRSGKVTFGVYLAHQSARNSTHPVLSIGSHVIPKISDSTDKF.

Residue Lys262 is modified to N6-(pyridoxal phosphate)lysine. Cys422 is a catalytic residue. In terms of domain architecture, MOSC spans 651–823 (AWLSEFLGKP…LSIGSHVIPK (173 aa)).

This sequence belongs to the class-V pyridoxal-phosphate-dependent aminotransferase family. MOCOS subfamily. It depends on pyridoxal 5'-phosphate as a cofactor.

It carries out the reaction Mo-molybdopterin + L-cysteine + AH2 = thio-Mo-molybdopterin + L-alanine + A + H2O. It participates in cofactor biosynthesis; molybdopterin biosynthesis. Functionally, sulfurates the molybdenum cofactor. Sulfation of molybdenum is essential for xanthine dehydrogenase (XDH) and aldehyde oxidase (ADO) enzymes in which molybdenum cofactor is liganded by 1 oxygen and 1 sulfur atom in active form. The protein is Molybdenum cofactor sulfurase (mocos) of Danio rerio (Zebrafish).